The primary structure comprises 359 residues: Protein Wnt-5b (359 aa).

The signal sequence occupies residues methionine 1–alanine 17. Cysteine 83 and cysteine 94 form a disulfide bridge. N-linked (GlcNAc...) asparagine glycans are attached at residues asparagine 93 and asparagine 99. Cystine bridges form between cysteine 133–cysteine 141, cysteine 143–cysteine 161, cysteine 217–cysteine 231, cysteine 219–cysteine 226, cysteine 288–cysteine 319, cysteine 304–cysteine 314, cysteine 318–cysteine 358, cysteine 334–cysteine 349, cysteine 336–cysteine 346, and cysteine 341–cysteine 342. Residue serine 223 is the site of O-palmitoleoyl serine; by PORCN attachment. Asparagine 291 and asparagine 305 each carry an N-linked (GlcNAc...) asparagine glycan.

Belongs to the Wnt family. In terms of assembly, interacts with PORCN. Post-translationally, palmitoleoylation is required for efficient binding to frizzled receptors. Depalmitoleoylation leads to Wnt signaling pathway inhibition.

The protein resides in the secreted. The protein localises to the extracellular space. Its subcellular location is the extracellular matrix. Ligand for members of the frizzled family of seven transmembrane receptors. Probable developmental protein. May be a signaling molecule which affects the development of discrete regions of tissues. Is likely to signal over only few cell diameters. This Mus musculus (Mouse) protein is Protein Wnt-5b (Wnt5b).